We begin with the raw amino-acid sequence, 89 residues long: Small ribosomal subunit protein uS14A (89 aa).

Belongs to the universal ribosomal protein uS14 family. Part of the 30S ribosomal subunit. Contacts proteins S3 and S10.

In terms of biological role, binds 16S rRNA, required for the assembly of 30S particles and may also be responsible for determining the conformation of the 16S rRNA at the A site. This is Small ribosomal subunit protein uS14A from Pediococcus pentosaceus (strain ATCC 25745 / CCUG 21536 / LMG 10740 / 183-1w).